The chain runs to 72 residues: Large ribosomal subunit protein bL28 (72 aa).

Belongs to the bacterial ribosomal protein bL28 family.

This is Large ribosomal subunit protein bL28 from Chlorobium phaeovibrioides (strain DSM 265 / 1930) (Prosthecochloris vibrioformis (strain DSM 265)).